The chain runs to 352 residues: Protein pelota homolog (352 aa).

This sequence belongs to the eukaryotic release factor 1 family. Pelota subfamily. In terms of assembly, monomer. The cofactor is a divalent metal cation.

It is found in the cytoplasm. Functionally, may function in recognizing stalled ribosomes, interact with stem-loop structures in stalled mRNA molecules, and effect endonucleolytic cleavage of the mRNA. May play a role in the release non-functional ribosomes and degradation of damaged mRNAs. Has endoribonuclease activity. The sequence is that of Protein pelota homolog from Thermofilum pendens (strain DSM 2475 / Hrk 5).